Consider the following 948-residue polypeptide: 3-hydroxy-3-methylglutaryl-coenzyme A reductase (948 aa).

Helical transmembrane passes span leucine 9–isoleucine 25, valine 55–cysteine 71, leucine 96–valine 112, threonine 124–leucine 140, isoleucine 207–isoleucine 223, and cysteine 286–leucine 302. Asparagine 316 is a glycosylation site (N-linked (GlcNAc...) asparagine). The chain crosses the membrane as a helical span at residues valine 347–phenylalanine 363. The segment at lysine 364–leucine 466 is linker. A glycan (N-linked (GlcNAc...) asparagine) is linked at asparagine 430. A catalytic region spans residues glycine 467–methionine 948. Residues glutamate 567, lysine 699, and aspartate 777 each act as charge relay system in the active site. Residue histidine 869 is the Proton donor of the active site. N-linked (GlcNAc...) asparagine glycosylation occurs at asparagine 895.

The protein belongs to the HMG-CoA reductase family.

The protein resides in the endoplasmic reticulum membrane. Its subcellular location is the peroxisome membrane. The catalysed reaction is (R)-mevalonate + 2 NADP(+) + CoA = (3S)-3-hydroxy-3-methylglutaryl-CoA + 2 NADPH + 2 H(+). Its pathway is metabolic intermediate biosynthesis; (R)-mevalonate biosynthesis; (R)-mevalonate from acetyl-CoA: step 3/3. This transmembrane glycoprotein is involved in the control of cholesterol and nonsterol isoprenoid compounds biosynthesis. It is the rate-limiting enzyme of sterol biosynthesis. In Schistosoma mansoni (Blood fluke), this protein is 3-hydroxy-3-methylglutaryl-coenzyme A reductase.